The primary structure comprises 151 residues: Natriuretic peptides A (151 aa).

The first 25 residues, 1-25 (MSSFSTTTVSFLLLLAFQLLGQTRA), serve as a signal peptide directing secretion. Residues 62–105 (VLSEPNEEAGAALSPLPEVPPWTGEVSPAQRDGGALGRGPWDSS) form a disordered region. The propeptide occupies 93 to 103 (DGGALGRGPWD). Residue serine 129 is modified to Phosphoserine. A disulfide bond links cysteine 130 and cysteine 146. The interval 147–151 (NSFRY) is important for degradation of atrial natriuretic peptide by IDE.

This sequence belongs to the natriuretic peptide family. Homodimer; disulfide-linked antiparallel dimer. The precursor molecule is proteolytically cleaved by CORIN at Arg-123 to produce atrial natriuretic peptide. Undergoes further proteolytic cleavage by unknown proteases to give rise to long-acting natriuretic peptide, vessel dilator and kaliuretic peptide. Additional processing gives rise to the auriculin and atriopeptin peptides. In the kidneys, alternative processing by an unknown protease results in the peptide urodilatin. In terms of processing, cleavage by MME initiates degradation of the factor and thereby regulates its activity. Degraded by IDE (in vitro). During IDE degradation, the resulting products can temporarily stimulate NPR2 to produce cGMP, before the fragments are completely degraded and inactivated by IDE (in vitro). Post-translationally, degraded by IDE. Phosphorylation on Ser-129 decreases vasorelaxant activity. Detected in the kidney distal tubular cells (at protein level). Present in urine (at protein level). As to expression, detected in atrial and ventricular plasma samples, and in adipocytes (at protein level). Detected in urine in one study. However, was not detected in urine in another study. In the brain, predominantly expressed in the gray matter with very weak expression in the white matter (at protein level). Localizes to astrocyte-like structures throughout the white matter, and in the cerebral vessels detected in the leptomeningeal and parenchymal vessels, and endothelium and smooth muscle layers (at protein level). Relatively low levels of expression in the kidneys compared to urodilatin (at protein level).

The protein resides in the secreted. The protein localises to the perikaryon. It localises to the cell projection. Hormone that plays a key role in mediating cardio-renal homeostasis, and is involved in vascular remodeling and regulating energy metabolism. Acts by specifically binding and stimulating NPR1 to produce cGMP, which in turn activates effector proteins, such as PRKG1, that drive various biological responses. Regulates vasodilation, natriuresis, diuresis and aldosterone synthesis and is therefore essential for regulating blood pressure, controlling the extracellular fluid volume and maintaining the fluid-electrolyte balance. Also involved in inhibiting cardiac remodeling and cardiac hypertrophy by inducing cardiomyocyte apoptosis and attenuating the growth of cardiomyocytes and fibroblasts. Plays a role in female pregnancy by promoting trophoblast invasion and spiral artery remodeling in uterus, and thus prevents pregnancy-induced hypertension. In adipose tissue, acts in various cGMP- and PKG-dependent pathways to regulate lipid metabolism and energy homeostasis. This includes up-regulating lipid metabolism and mitochondrial oxygen utilization by activating the AMP-activated protein kinase (AMPK), and increasing energy expenditure by acting via MAPK11 to promote the UCP1-dependent thermogenesis of brown adipose tissue. Binds the clearance receptor NPR3 which removes the hormone from circulation. In terms of biological role, may have a role in cardio-renal homeostasis through regulation of natriuresis, diuresis, vasodilation, and inhibiting aldosterone synthesis. In vitro, promotes the production of cGMP and induces vasodilation. May promote natriuresis, at least in part, by enhancing prostaglandin E2 synthesis resulting in the inhibition of renal Na+-K+-ATPase. However reports on the involvement of this peptide in mammal blood volume and blood pressure homeostasis are conflicting; according to a report, in vivo it is not sufficient to activate cGMP and does not inhibit collecting duct transport nor effect diuresis and natriuresis. Appears to bind to specific receptors that are distinct from the receptors bound by atrial natriuretic peptide and vessel dilator. Possibly enhances protein excretion in urine by decreasing proximal tubular protein reabsorption. Functionally, may have a role in cardio-renal homeostasis through regulation of natriuresis, diuresis, and vasodilation. In vitro, promotes the production of cGMP and induces vasodilation. May promote natriuresis, at least in part, by enhancing prostaglandin E2 synthesis resulting in the inhibition of renal Na+-K+-ATPase. However reports on the involvement of this peptide in mammal blood volume and blood pressure homeostasis are conflicting; according to a report it is not sufficient to activate cGMP and does not inhibit collecting duct transport nor effect diuresis and natriuresis. Appears to bind to specific receptors that are distinct from the receptors bound by the atrial natriuretic and long-acting natriuretic peptides. Possibly functions in protein excretion in urine by maintaining the integrity of the proximal tubules and enhancing protein excretion by decreasing proximal tubular protein reabsorption. Its function is as follows. May have a role in cardio-renal homeostasis through regulation of diuresis and inhibiting aldosterone synthesis. In vitro, promotes the production of cGMP and induces vasodilation. May promote natriuresis, at least in part, by enhancing prostaglandin E2 synthesis resulting in the inhibition of renal Na+-K+-ATPase. May have a role in potassium excretion but not sodium excretion (natriuresis). Possibly enhances protein excretion in urine by decreasing proximal tubular protein reabsorption. Hormone produced in the kidneys that appears to be important for maintaining cardio-renal homeostasis. Mediates vasodilation, natriuresis and diuresis primarily in the renal system, in order to maintain the extracellular fluid volume and control the fluid-electrolyte balance. Specifically binds and stimulates cGMP production by renal transmembrane receptors, likely NPR1. Urodilatin not ANP, may be the natriuretic peptide responsible for the regulation of sodium and water homeostasis in the kidney. In terms of biological role, may have a role in cardio-renal homeostasis through regulation of natriuresis and vasodilation. In vivo promotes natriuresis and in vitro, vasodilates renal artery strips. Functionally, may have a role in cardio-renal homeostasis through regulation of regulation of natriuresis and vasodilation. In vivo promotes natriuresis. In vitro, vasodilates intestinal smooth muscle but not smooth muscle strips. Its function is as follows. May have a role in cardio-renal homeostasis through regulation of natriuresis and vasodilation. In vivo promotes natriuresis. In vitro, selectively vasodilates intestinal and vascular smooth muscle strips. May have a role in cardio-renal homeostasis through regulation of natriuresis and vasodilation. In vivo promotes natriuresis. In vitro, selectively vasodilates intestinal smooth muscle but not vascular smooth muscle strips. In Homo sapiens (Human), this protein is Natriuretic peptides A (NPPA).